A 446-amino-acid chain; its full sequence is tRNA modification GTPase MnmE (446 aa).

(6S)-5-formyl-5,6,7,8-tetrahydrofolate-binding residues include arginine 22, glutamate 80, and lysine 119. A TrmE-type G domain is found at 215 to 370 (GLSLVIAGRP…LKKVIKQVVG (156 aa)). K(+) is bound at residue asparagine 225. Residues 225–230 (NAGKST), 244–250 (TEIAGTT), and 269–272 (DTAG) each bind GTP. Serine 229 is a binding site for Mg(2+). K(+) is bound by residues threonine 244, isoleucine 246, and threonine 249. Mg(2+) is bound at residue threonine 250. (6S)-5-formyl-5,6,7,8-tetrahydrofolate is bound at residue lysine 446.

It belongs to the TRAFAC class TrmE-Era-EngA-EngB-Septin-like GTPase superfamily. TrmE GTPase family. As to quaternary structure, homodimer. Heterotetramer of two MnmE and two MnmG subunits. Requires K(+) as cofactor.

It is found in the cytoplasm. In terms of biological role, exhibits a very high intrinsic GTPase hydrolysis rate. Involved in the addition of a carboxymethylaminomethyl (cmnm) group at the wobble position (U34) of certain tRNAs, forming tRNA-cmnm(5)s(2)U34. This chain is tRNA modification GTPase MnmE, found in Legionella pneumophila (strain Paris).